The following is a 694-amino-acid chain: Polyphosphate kinase (694 aa).

N45 is a binding site for ATP. Mg(2+) contacts are provided by R367 and R397. H427 acts as the Phosphohistidine intermediate in catalysis. ATP is bound by residues Y460, R553, and H580.

It belongs to the polyphosphate kinase 1 (PPK1) family. It depends on Mg(2+) as a cofactor. Post-translationally, an intermediate of this reaction is the autophosphorylated ppk in which a phosphate is covalently linked to a histidine residue through a N-P bond.

The enzyme catalyses [phosphate](n) + ATP = [phosphate](n+1) + ADP. Catalyzes the reversible transfer of the terminal phosphate of ATP to form a long-chain polyphosphate (polyP). This Campylobacter coli protein is Polyphosphate kinase.